We begin with the raw amino-acid sequence, 506 residues long: Maturase K (506 aa).

It belongs to the intron maturase 2 family. MatK subfamily.

Its subcellular location is the plastid. The protein localises to the chloroplast. Its function is as follows. Usually encoded in the trnK tRNA gene intron. Probably assists in splicing its own and other chloroplast group II introns. The protein is Maturase K of Trifolium repens (Creeping white clover).